The sequence spans 150 residues: D-aminoacyl-tRNA deacylase (150 aa).

A Gly-cisPro motif, important for rejection of L-amino acids motif is present at residues 140–141 (GP).

The protein belongs to the DTD family. Homodimer.

It is found in the cytoplasm. The catalysed reaction is glycyl-tRNA(Ala) + H2O = tRNA(Ala) + glycine + H(+). The enzyme catalyses a D-aminoacyl-tRNA + H2O = a tRNA + a D-alpha-amino acid + H(+). Functionally, an aminoacyl-tRNA editing enzyme that deacylates mischarged D-aminoacyl-tRNAs. Also deacylates mischarged glycyl-tRNA(Ala), protecting cells against glycine mischarging by AlaRS. Acts via tRNA-based rather than protein-based catalysis; rejects L-amino acids rather than detecting D-amino acids in the active site. By recycling D-aminoacyl-tRNA to D-amino acids and free tRNA molecules, this enzyme counteracts the toxicity associated with the formation of D-aminoacyl-tRNA entities in vivo and helps enforce protein L-homochirality. The protein is D-aminoacyl-tRNA deacylase (DTD1) of Kluyveromyces lactis (strain ATCC 8585 / CBS 2359 / DSM 70799 / NBRC 1267 / NRRL Y-1140 / WM37) (Yeast).